The following is a 160-amino-acid chain: Cytochrome b6-f complex subunit 4 (160 aa).

Helical transmembrane passes span 36–56, 95–115, and 131–151; these read LLYM…GLAV, LLGI…PFIE, and AVFL…ALPI.

Belongs to the cytochrome b family. PetD subfamily. In terms of assembly, the 4 large subunits of the cytochrome b6-f complex are cytochrome b6, subunit IV (17 kDa polypeptide, PetD), cytochrome f and the Rieske protein, while the 4 small subunits are PetG, PetL, PetM and PetN. The complex functions as a dimer.

The protein localises to the cellular thylakoid membrane. Its function is as follows. Component of the cytochrome b6-f complex, which mediates electron transfer between photosystem II (PSII) and photosystem I (PSI), cyclic electron flow around PSI, and state transitions. This is Cytochrome b6-f complex subunit 4 from Synechococcus elongatus (strain ATCC 33912 / PCC 7942 / FACHB-805) (Anacystis nidulans R2).